The following is a 982-amino-acid chain: Glycine dehydrogenase (decarboxylating) (982 aa).

N6-(pyridoxal phosphate)lysine is present on Lys-721.

This sequence belongs to the GcvP family. The glycine cleavage system is composed of four proteins: P, T, L and H. The cofactor is pyridoxal 5'-phosphate.

It carries out the reaction N(6)-[(R)-lipoyl]-L-lysyl-[glycine-cleavage complex H protein] + glycine + H(+) = N(6)-[(R)-S(8)-aminomethyldihydrolipoyl]-L-lysyl-[glycine-cleavage complex H protein] + CO2. Functionally, the glycine cleavage system catalyzes the degradation of glycine. The P protein binds the alpha-amino group of glycine through its pyridoxal phosphate cofactor; CO(2) is released and the remaining methylamine moiety is then transferred to the lipoamide cofactor of the H protein. The chain is Glycine dehydrogenase (decarboxylating) from Prochlorococcus marinus (strain MIT 9303).